A 154-amino-acid polypeptide reads, in one-letter code: Small ribosomal subunit protein uS15 (154 aa).

The segment covering 1 to 11 (MSRLHAHKRYH) has biased composition (basic residues). The segment at 1 to 24 (MSRLHAHKRYHGQSGSKRPLRTTK) is disordered.

The protein belongs to the universal ribosomal protein uS15 family. Part of the 30S ribosomal subunit.

This Nanoarchaeum equitans (strain Kin4-M) protein is Small ribosomal subunit protein uS15.